The sequence spans 201 residues: Large ribosomal subunit protein uL4 (201 aa).

The interval 44-71 (RAQKTRAEVTGSGKKPWRQKGTGRARSG) is disordered.

The protein belongs to the universal ribosomal protein uL4 family. In terms of assembly, part of the 50S ribosomal subunit.

In terms of biological role, one of the primary rRNA binding proteins, this protein initially binds near the 5'-end of the 23S rRNA. It is important during the early stages of 50S assembly. It makes multiple contacts with different domains of the 23S rRNA in the assembled 50S subunit and ribosome. Forms part of the polypeptide exit tunnel. The sequence is that of Large ribosomal subunit protein uL4 from Edwardsiella ictaluri (strain 93-146).